The primary structure comprises 20 residues: Protein C activator (20 aa).

One can recognise a Peptidase S1 domain in the interval Val-1–Ala-20.

This sequence belongs to the peptidase S1 family. Snake venom subfamily. Monomer. In terms of processing, glycosylated. Expressed by the venom gland.

It is found in the secreted. With respect to regulation, inhibited by calcium. Functionally, snake venom serine protease that selectively cleaves the heavy chain of protein C (PROC). This activation is thrombomodulin-independent. The sequence is that of Protein C activator from Agkistrodon bilineatus (Cantil).